A 196-amino-acid polypeptide reads, in one-letter code: UMP-CMP kinase (196 aa).

13 to 18 (GAGKGT) contacts ATP. Ser-33 bears the Phosphoserine mark. Positions 33–63 (SAGELLRDERKNPDSQYGELIEKYIKEGKIV) are NMP. A ribonucleoside 5'-phosphate is bound at residue Arg-39. 2 positions are modified to N6-acetyllysine: Lys-43 and Lys-55. A ribonucleoside 5'-phosphate is bound at residue 61–63 (KIV). Lys-73 is covalently cross-linked (Glycyl lysine isopeptide (Lys-Gly) (interchain with G-Cter in SUMO2)). 93-96 (GFPR) is an a ribonucleoside 5'-phosphate binding site. Asn-100 lines the CMP pocket. Lys-106 is subject to N6-succinyllysine. The LID stretch occupies residues 133 to 143 (ERGKSSGRSDD). Arg-134 is an ATP binding site. Positions 140 and 151 each coordinate a ribonucleoside 5'-phosphate. Residue Lys-179 coordinates ATP. Residue Ser-180 is modified to Phosphoserine.

Belongs to the adenylate kinase family. UMP-CMP kinase subfamily. As to quaternary structure, monomer. It depends on Mg(2+) as a cofactor. Ubiquitously expressed.

The protein localises to the nucleus. It is found in the cytoplasm. It carries out the reaction CMP + ATP = CDP + ADP. It catalyses the reaction dCMP + ATP = dCDP + ADP. The catalysed reaction is UMP + ATP = UDP + ADP. The enzyme catalyses a 2'-deoxyribonucleoside 5'-diphosphate + ATP = a 2'-deoxyribonucleoside 5'-triphosphate + ADP. It carries out the reaction a ribonucleoside 5'-diphosphate + ATP = a ribonucleoside 5'-triphosphate + ADP. In terms of biological role, catalyzes the phosphorylation of pyrimidine nucleoside monophosphates at the expense of ATP. Plays an important role in de novo pyrimidine nucleotide biosynthesis. Has preference for UMP and CMP as phosphate acceptors. Also displays broad nucleoside diphosphate kinase activity. In Homo sapiens (Human), this protein is UMP-CMP kinase.